A 155-amino-acid chain; its full sequence is MRKNAAPKRPIVKDPVYGSEVVTQLVNKVLLDGKKSTAERIVYGALDKCKEKTGIDPVLTLEKALGNIKPDLEVRSRRVGGATYQVPVEVRPARANTLALRWLVTFTRQRRENTMIERLANEILDAANGLGASVKRREDTHKMAEANRAFAHYRW.

Belongs to the universal ribosomal protein uS7 family. In terms of assembly, part of the 30S ribosomal subunit. Contacts proteins S9 and S11.

One of the primary rRNA binding proteins, it binds directly to 16S rRNA where it nucleates assembly of the head domain of the 30S subunit. Is located at the subunit interface close to the decoding center, probably blocks exit of the E-site tRNA. In Corynebacterium diphtheriae (strain ATCC 700971 / NCTC 13129 / Biotype gravis), this protein is Small ribosomal subunit protein uS7.